A 227-amino-acid polypeptide reads, in one-letter code: Ribonuclease HII (227 aa).

The RNase H type-2 domain occupies 16–205; that stretch reads SLLAGVDEVG…VKMALDAVGV (190 aa). Positions 22, 23, and 114 each coordinate a divalent metal cation.

Belongs to the RNase HII family. Mn(2+) is required as a cofactor. Mg(2+) serves as cofactor.

It localises to the cytoplasm. The enzyme catalyses Endonucleolytic cleavage to 5'-phosphomonoester.. Functionally, endonuclease that specifically degrades the RNA of RNA-DNA hybrids. The sequence is that of Ribonuclease HII from Marinobacter nauticus (strain ATCC 700491 / DSM 11845 / VT8) (Marinobacter aquaeolei).